The primary structure comprises 535 residues: MAKILTIVMLVFVSMAGWMFGADTGSIGGITNMRDFQSRYADRYDPVTDTYSYSSARQGLLVGMVNTGTTVGCLLSSPLGDRFGKRKCIMGWTLVYITGVIVQLTTIPSWVQMMVAKIWTGLGIGALSVIAPGYQSESSPPHIRGAIVTTYQLFITLGIFIAACINMGTHKYTTHPEAQWRVPIGINLLWGILMFFGMLFLPESPRYLAVKGRNEECMKILTRNAGLPADHPIMQKEYNAIQADVEAELAGGPCSWPQIFSNEIRYRTLLGMGVMAFQQLTGNNYFFYYGTQVFRGTGLNSPFLAALILDAVNFGCTFGAIFVLEYFGRRGPLIVGGVWQSICFFIYASVGDRALTRPNGTSNHRAGAVMIVFSCLFIFSFAQTWAPAAYVIVGESYPIRYRSKCAAVATASNWFWNFMISFFTPFISNSIGFKYGYVFAACNLCAAIIIFLFAKETKGLTLEEINQLYLSNIKPWNTGAYQRDREDIKQSDSEKERGPTSKLHEYVEHAPNSYASTHSTESENYPQQVTNPVGL.

The Cytoplasmic portion of the chain corresponds to 1–9 (MAKILTIVM). The chain crosses the membrane as a helical span at residues 10–30 (LVFVSMAGWMFGADTGSIGGI). Residues 31 to 58 (TNMRDFQSRYADRYDPVTDTYSYSSARQ) lie on the Extracellular side of the membrane. The helical transmembrane segment at 59-79 (GLLVGMVNTGTTVGCLLSSPL) threads the bilayer. Topologically, residues 80–87 (GDRFGKRK) are cytoplasmic. A helical membrane pass occupies residues 88-108 (CIMGWTLVYITGVIVQLTTIP). The Extracellular portion of the chain corresponds to 109–112 (SWVQ). The chain crosses the membrane as a helical span at residues 113–133 (MMVAKIWTGLGIGALSVIAPG). Over 134 to 144 (YQSESSPPHIR) the chain is Cytoplasmic. Residues 145 to 165 (GAIVTTYQLFITLGIFIAACI) form a helical membrane-spanning segment. Residues 166-181 (NMGTHKYTTHPEAQWR) lie on the Extracellular side of the membrane. Residues 182 to 202 (VPIGINLLWGILMFFGMLFLP) traverse the membrane as a helical segment. Residues 203 to 268 (ESPRYLAVKG…IFSNEIRYRT (66 aa)) are Cytoplasmic-facing. Residues 269–287 (LLGMGVMAFQQLTGNNYFF) form a helical membrane-spanning segment. Over 288–303 (YYGTQVFRGTGLNSPF) the chain is Extracellular. The helical transmembrane segment at 304–324 (LAALILDAVNFGCTFGAIFVL) threads the bilayer. At 325-330 (EYFGRR) the chain is on the cytoplasmic side. Residues 331 to 351 (GPLIVGGVWQSICFFIYASVG) form a helical membrane-spanning segment. Residues 352-365 (DRALTRPNGTSNHR) are Extracellular-facing. An N-linked (GlcNAc...) asparagine glycan is attached at Asn359. The chain crosses the membrane as a helical span at residues 366–386 (AGAVMIVFSCLFIFSFAQTWA). Over 387 to 406 (PAAYVIVGESYPIRYRSKCA) the chain is Cytoplasmic. A helical membrane pass occupies residues 407–427 (AVATASNWFWNFMISFFTPFI). At 428–434 (SNSIGFK) the chain is on the extracellular side. Residues 435-455 (YGYVFAACNLCAAIIIFLFAK) traverse the membrane as a helical segment. Topologically, residues 456-535 (ETKGLTLEEI…PQQVTNPVGL (80 aa)) are cytoplasmic. The span at 484-508 (DREDIKQSDSEKERGPTSKLHEYVE) shows a compositional bias: basic and acidic residues. The segment at 484–535 (DREDIKQSDSEKERGPTSKLHEYVEHAPNSYASTHSTESENYPQQVTNPVGL) is disordered. Residues 513–535 (SYASTHSTESENYPQQVTNPVGL) are compositionally biased toward polar residues.

It belongs to the major facilitator superfamily. Sugar transporter (TC 2.A.1.1) family.

It localises to the membrane. In terms of biological role, high-affinity fructose transporter. The polypeptide is High-affinity fructose transporter ght6 (ght6) (Schizosaccharomyces pombe (strain 972 / ATCC 24843) (Fission yeast)).